A 700-amino-acid polypeptide reads, in one-letter code: Elongation factor G 2 (700 aa).

In terms of domain architecture, tr-type G spans 8-290 (ERYRNIGISA…AVIDFLPSPV (283 aa)). Residues 17-24 (AHIDAGKT), 88-92 (DTPGH), and 142-145 (NKMD) contribute to the GTP site.

The protein belongs to the TRAFAC class translation factor GTPase superfamily. Classic translation factor GTPase family. EF-G/EF-2 subfamily.

The protein resides in the cytoplasm. In terms of biological role, catalyzes the GTP-dependent ribosomal translocation step during translation elongation. During this step, the ribosome changes from the pre-translocational (PRE) to the post-translocational (POST) state as the newly formed A-site-bound peptidyl-tRNA and P-site-bound deacylated tRNA move to the P and E sites, respectively. Catalyzes the coordinated movement of the two tRNA molecules, the mRNA and conformational changes in the ribosome. This chain is Elongation factor G 2, found in Burkholderia orbicola (strain AU 1054).